The sequence spans 2174 residues: MSASFVPNGASLEDCHCNLFCLADLTGIKWKKYVWQGPTSAPILFPVTEEDPILSSFSRCLKADVLGVWRRDQRPGRRELWIFWWGEDPSFADLIHHDLSEEEDGVWENGLSYECRTLLFKAVHNLLERCLMNRNFVRIGKWFVKPYEKDEKPINKSEHLSCSFTFFLHGDSNVCTSVEINQHQPVYLLSEEHITLAQQSNSPFQVILCPFGLNGTLTGQAFKMSDSATKKLIGEWKQFYPISCCLKEMSEEKQEDMDWEDDSLAAVEVLVAGVRMIYPACFVLVPQSDIPTPSPVGSTHCSSSCLGVHQVPASTRDPAMSSVTLTPPTSPEEVQTVDPQSVQKWVKFSSVSDGFNSDSTSHHGGKIPRKLANHVVDRVWQECNMNRAQNKRKYSASSGGLCEEATAAKVASWDFVEATQRTNCSCLRHKNLKSRNAGQQGQAPSLGQQQQILPKHKTNEKQEKSEKPQKRPLTPFHHRVSVSDDVGMDADSASQRLVISAPDSQVRFSNIRTNDVAKTPQMHGTEMANSPQPPPLSPHPCDVVDEGVTKTPSTPQSQHFYQMPTPDPLVPSKPMEDRIDSLSQSFPPQYQEAVEPTVYVGTAVNLEEDEANIAWKYYKFPKKKDVEFLPPQLPSDKFKDDPVGPFGQESVTSVTELMVQCKKPLKVSDELVQQYQIKNQCLSAIASDAEQEPKIDPYAFVEGDEEFLFPDKKDRQNSEREAGKKHKVEDGTSSVTVLSHEEDAMSLFSPSIKQDAPRPTSHARPPSTSLIYDSDLAVSYTDLDNLFNSDEDELTPGSKKSANGSDDKASCKESKTGNLDPLSCISTADLHKMYPTPPSLEQHIMGFSPMNMNNKEYGSMDTTPGGTVLEGNSSSIGAQFKIEVDEGFCSPKPSEIKDFSYVYKPENCQILVGCSMFAPLKTLPSQYLPPIKLPEECIYRQSWTVGKLELLSSGPSMPFIKEGDGSNMDQEYGTAYTPQTHTSFGMPPSSAPPSNSGAGILPSPSTPRFPTPRTPRTPRTPRGAGGPASAQGSVKYENSDLYSPASTPSTCRPLNSVEPATVPSIPEAHSLYVNLILSESVMNLFKDCNFDSCCICVCNMNIKGADVGVYIPDPTQEAQYRCTCGFSAVMNRKFGNNSGLFLEDELDIIGRNTDCGKEAEKRFEALRATSAEHVNGGLKESEKLSDDLILLLQDQCTNLFSPFGAADQDPFPKSGVISNWVRVEERDCCNDCYLALEHGRQFMDNMSGGKVDEALVKSSCLHPWSKRNDVSMQCSQDILRMLLSLQPVLQDAIQKKRTVRPWGVQGPLTWQQFHKMAGRGSYGTDESPEPLPIPTFLLGYDYDYLVLSPFALPYWERLMLEPYGSQRDIAYVVLCPENEALLNGAKSFFRDLTAIYESCRLGQHRPVSRLLTDGIMRVGSTASKKLSEKLVAEWFSQAADGNNEAFSKLKLYAQVCRYDLGPYLASLPLDSSLLSQPNLVAPTSQSLITPPQMTNTGNANTPSATLASAASSTMTVTSGVAISTSVATANSTLTTASTSSSSSSNLNSGVSSNKLPSFPPFGSMNSNAAGSMSTQANTVQSGQLGGQQTSALQTAGISGESSSLPTQPHPDVSESTMDRDKVGIPTDGDSHAVTYPPAIVVYIIDPFTYENTDESTNSSSVWTLGLLRCFLEMVQTLPPHIKSTVSVQIIPCQYLLQPVKHEDREIYPQHLKSLAFSAFTQCRRPLPTSTNVKTLTGFGPGLAMETALRSPDRPECIRLYAPPFILAPVKDKQTELGETFGEAGQKYNVLFVGYCLSHDQRWILASCTDLYGELLETCIINIDVPNRARRKKSSARKFGLQKLWEWCLGLVQMSSLPWRVVIGRLGRIGHGELKDWSCLLSRRNLQSLSKRLKDMCRMCGISAADSPSILSACLVAMEPQGSFVIMPDSVSTGSVFGRSTTLNMQTSQLNTPQDTSCTHILVFPTSASVQVASATYTTENLDLAFNPNNDGADGMGIFDLLDTGDDLDPDIINILPASPTGSPVHSPGSHYPHGGDAGKGQSTDRLLSTEPHEEVPNILQQPLALGYFVSTAKAGPLPDWFWSACPQAQYQCPLFLKASLHLHVPSVQSDELLHSKHSHPLDSNQTSDVLRFVLEQYNALSWLTCDPATQDRRSCLPIHFVVLNQLYNFIMNML.

Ser-395 is modified (phosphoserine). The tract at residues 435-477 (RNAGQQGQAPSLGQQQQILPKHKTNEKQEKSEKPQKRPLTPFH) is disordered. Residues 438-451 (GQQGQAPSLGQQQQ) are compositionally biased toward low complexity. Over residues 457–469 (KTNEKQEKSEKPQ) the composition is skewed to basic and acidic residues. Residues Ser-500, Ser-504, Ser-530, and Ser-537 each carry the phosphoserine modification. Residues 709–730 (FPDKKDRQNSEREAGKKHKVED) are compositionally biased toward basic and acidic residues. Disordered regions lie at residues 709–735 (FPDKKDRQNSEREAGKKHKVEDGTSSV), 749–769 (SPSIKQDAPRPTSHARPPSTS), and 787–816 (FNSDEDELTPGSKKSANGSDDKASCKESKT). Basic and acidic residues predominate over residues 805-815 (SDDKASCKESK). A phosphoserine mark is found at Ser-826 and Ser-890. The interval 959-1054 (FIKEGDGSNM…ASTPSTCRPL (96 aa)) is disordered. Positions 992 to 1003 (PPSNSGAGILPS) are enriched in low complexity. Over residues 1004–1015 (PSTPRFPTPRTP) the composition is skewed to pro residues. Ser-1029 is modified (phosphoserine). Over residues 1040–1053 (DLYSPASTPSTCRP) the composition is skewed to polar residues. 2 short sequence motifs (LXXLL motif) span residues 1188–1192 (LILLL) and 1279–1283 (LRMLL). Polar residues-rich tracts occupy residues 1484 to 1498 (SQSLITPPQMTNTGN) and 1563 to 1606 (SMNS…SLPT). Disordered stretches follow at residues 1484–1505 (SQSLITPPQMTNTGNANTPSAT), 1557–1617 (SFPP…ESTM), and 2015–2048 (LPASPTGSPVHSPGSHYPHGGDAGKGQSTDRLLS).

It belongs to the Mediator complex subunit 13 family. As to quaternary structure, component of the Mediator complex, which is composed of MED1, MED4, MED6, MED7, MED8, MED9, MED10, MED11, MED12, MED13, MED13L, MED14, MED15, MED16, MED17, MED18, MED19, MED20, MED21, MED22, MED23, MED24, MED25, MED26, MED27, MED29, MED30, MED31, CCNC, CDK8 and CDC2L6/CDK11. The MED12, MED13, CCNC and CDK8 subunits form a distinct module termed the CDK8 module. Mediator containing the CDK8 module is less active than Mediator lacking this module in supporting transcriptional activation. Individual preparations of the Mediator complex lacking one or more distinct subunits have been variously termed ARC, CRSP, DRIP, PC2, SMCC and TRAP. Ubiquitous.

It localises to the nucleus. Component of the Mediator complex, a coactivator involved in the regulated transcription of nearly all RNA polymerase II-dependent genes. Mediator functions as a bridge to convey information from gene-specific regulatory proteins to the basal RNA polymerase II transcription machinery. Mediator is recruited to promoters by direct interactions with regulatory proteins and serves as a scaffold for the assembly of a functional preinitiation complex with RNA polymerase II and the general transcription factors. The polypeptide is Mediator of RNA polymerase II transcription subunit 13 (Homo sapiens (Human)).